We begin with the raw amino-acid sequence, 834 residues long: Protein argonaute (834 aa).

A PAZ domain is found at 210–326; the sequence is SLLQILMEYT…LPIEFCFVVK (117 aa). Positions 500-799 constitute a Piwi domain; sequence YLFFILDKNS…VSNLARYQDV (300 aa).

It belongs to the argonaute family. Ago subfamily. Ago1, chp1 and tas3 interact to form the core of the RNA-induced transcriptional silencing (RITS) complex. The RITS complex interacts with the RDRC complex via interaction between ago1 and hrr1. Clr4 has a role in mediating this interaction. Component of the argonaute siRNA chaperone (ARC) complex composed of ago1, arb1 and arb2. Interacts with arb1.

The protein resides in the cytoplasm. Its subcellular location is the nucleus. It localises to the chromosome. It is found in the centromere. The protein localises to the telomere. Functionally, required for G1 arrest and mating in response to nitrogen starvation. Ago1 regulation of cytokinesis and cell cycle checkpoints occurs downstream of dcr1. Required, indirectly, for regulated hyperphosphorylation of cdc2. Has a role in the RNA interference (RNAi) pathway which is important for heterochromatin formation, accurate chromosome segregation, centromere cohesion and telomere function during mitosis and meiosis. Required for silencing at the centromeres and for initiation of transcriptionally silent heterochromatin at the mating type locus. Promotes histone H3K9 methylation necessary for centromere function. Required for recruitment of swi6 and cohesin to an ectopic dg repeat. A member of the RNA-induced transcriptional silencing (RITS) complex which is involved in the biosynthesis of dsRNA from primer siRNAs provided by the RNA-directed RNA polymerase (RDRC) complex. Has ribonuclease H-like cleavage (slicing) activity towards target messages complementary to siRNA and can direct site-specific cleavage of RNA substrates via siRNA. Slicing activity is required for both post-transcriptional and transcriptional gene silencing as well as for histone H3 'Lys-10' methylation spreading, conversion of double-stranded siRNA to single-stranded siRNA and siRNA-dependent association of ago1 with chromatin. A member of the argonaute siRNA chaperone (ARC) complex which is required for histone H3K9 methylation, heterochromatin assembly and siRNA generation. The ARC complex contains mostly double-stranded siRNA. This Schizosaccharomyces pombe (strain 972 / ATCC 24843) (Fission yeast) protein is Protein argonaute (ago1).